A 448-amino-acid chain; its full sequence is Adenylosuccinate synthetase (448 aa).

GTP-binding positions include G22–K28 and G50–T52. D23 functions as the Proton acceptor in the catalytic mechanism. Mg(2+)-binding residues include D23 and G50. IMP is bound by residues D23 to K26, N48 to H51, T139, R153, Q234, T249, and R321. H51 (proton donor) is an active-site residue. Residue S317–R323 coordinates substrate. Residues R323, K349–D351, and S431–G433 contribute to the GTP site.

The protein belongs to the adenylosuccinate synthetase family. As to quaternary structure, homodimer. The cofactor is Mg(2+).

Its subcellular location is the cytoplasm. It carries out the reaction IMP + L-aspartate + GTP = N(6)-(1,2-dicarboxyethyl)-AMP + GDP + phosphate + 2 H(+). Its pathway is purine metabolism; AMP biosynthesis via de novo pathway; AMP from IMP: step 1/2. Functionally, plays an important role in the de novo pathway of purine nucleotide biosynthesis. Catalyzes the first committed step in the biosynthesis of AMP from IMP. The chain is Adenylosuccinate synthetase from Burkholderia thailandensis (strain ATCC 700388 / DSM 13276 / CCUG 48851 / CIP 106301 / E264).